Consider the following 89-residue polypeptide: Long neurotoxin 1 (89 aa).

The N-terminal stretch at Met-1 to Ser-21 is a signal peptide. 4 cysteine pairs are disulfide-bonded: Cys-24–Cys-41, Cys-34–Cys-58, Cys-62–Cys-74, and Cys-75–Cys-80.

This sequence belongs to the three-finger toxin family. Long-chain subfamily. Type II alpha-neurotoxin sub-subfamily. Expressed by the venom gland.

It is found in the secreted. In terms of biological role, binds with high affinity to muscular (alpha-1/CHRNA1) and neuronal (alpha-7/CHRNA7) nicotinic acetylcholine receptor (nAChR) and inhibits acetylcholine from binding to the receptor, thereby impairing neuromuscular and neuronal transmission. The protein is Long neurotoxin 1 of Pseudonaja textilis (Eastern brown snake).